Here is a 552-residue protein sequence, read N- to C-terminus: MTKRIDSSLLYTALVVLLLLGVVHRSNARPRVNRPPGFMRFISNATDFASEDYYDYIIVGGGTAGCPLAATLSQSFRVLLLERGGVPYNRPNVMSHDGFLTTLTDVNNFDSPAQSFISEEGVPNARGRVLGGSSAINAGFYSRADKQFFENSGLVWDLSSVNQSYEWVERAIVFRPQLRTWQTAIRDALLEVGVHPFNGFTLEHKVGTKIGGSTFDRTGRRHSSADLLRYARSSNIRVAVYATVERVLLASSPSVSGSNVSAIGVVYRDQLGRFHHALIRDRGEVILSAGALGSPQLLFLSGIGPRSYLSTWGIPVALDQPHVGDFVYDNPRNGISIVPPVPMENSLIQVVGVTEDGAFLEAASNVIPFASPLHSVFIRAPASPLYVPVTTIMEKILGPVSIGLLRLASTDVRINPVVRFNYFSDPQDLERCVNGTRKIGEILRSRAMQDFMIREWFGNRRFRFVGAPLPVDQSNDLVMADFCRRTVSTIWHYHGGAVVGKVVDSDLKVIGVNSLRLVDGSTFNISPGTNPQATLMMLGRYMGLKMLRERMR.

The first 28 residues, 1-28, serve as a signal peptide directing secretion; sequence MTKRIDSSLLYTALVVLLLLGVVHRSNA. N-linked (GlcNAc...) asparagine glycosylation occurs at asparagine 44. 55-82 is an FAD binding site; sequence DYIIVGGGTAGCPLAATLSQSFRVLLLE. N-linked (GlcNAc...) asparagine glycans are attached at residues asparagine 162, asparagine 259, and asparagine 434. The active-site Proton acceptor is histidine 492.

The protein belongs to the GMC oxidoreductase family. Monomer. Requires FAD as cofactor. In terms of processing, glycosylated.

It catalyses the reaction (R)-mandelonitrile = benzaldehyde + hydrogen cyanide. The polypeptide is (R)-mandelonitrile lyase-like (Arabidopsis thaliana (Mouse-ear cress)).